The chain runs to 87 residues: Small ribosomal subunit protein bS20 (87 aa).

Residues 1–27 (MANIKSAKKRAVTSEKRRKHNASRRSM) are disordered.

The protein belongs to the bacterial ribosomal protein bS20 family.

Functionally, binds directly to 16S ribosomal RNA. The chain is Small ribosomal subunit protein bS20 from Erwinia tasmaniensis (strain DSM 17950 / CFBP 7177 / CIP 109463 / NCPPB 4357 / Et1/99).